The sequence spans 312 residues: MASYLDFEKNIQQIDEDIINAQIKGDTEAVSILKKNLEKEISKTYKNLSDFQRLQLARHPDRPYTLDYIELILNDAHEIHGDRAFRDDPAIVCFMGYLGEKKIIVIGEQKGRGTKDKIARNFGMPHPEGYRKALRVARLAEKFQIPILFLIDTPGAYPGIGAEERGQSEAIARNLYELSDLKIPTIAIVIGEGGSGGALAIGVADRLAMMKNSVFSVISPEGCAAILWNDPAKSEAATKAMKVTADDLKSQGLIDDVIDEPTNGAHRNKEAAAVAIADYVKKSLNELENIDVRELSANRMQKILKLGAYQEA.

The CoA carboxyltransferase C-terminal domain maps to 36–286 (NLEKEISKTY…ADYVKKSLNE (251 aa)).

Belongs to the AccA family. As to quaternary structure, acetyl-CoA carboxylase is a heterohexamer composed of biotin carboxyl carrier protein (AccB), biotin carboxylase (AccC) and two subunits each of ACCase subunit alpha (AccA) and ACCase subunit beta (AccD).

Its subcellular location is the cytoplasm. The enzyme catalyses N(6)-carboxybiotinyl-L-lysyl-[protein] + acetyl-CoA = N(6)-biotinyl-L-lysyl-[protein] + malonyl-CoA. It functions in the pathway lipid metabolism; malonyl-CoA biosynthesis; malonyl-CoA from acetyl-CoA: step 1/1. Functionally, component of the acetyl coenzyme A carboxylase (ACC) complex. First, biotin carboxylase catalyzes the carboxylation of biotin on its carrier protein (BCCP) and then the CO(2) group is transferred by the carboxyltransferase to acetyl-CoA to form malonyl-CoA. The polypeptide is Acetyl-coenzyme A carboxylase carboxyl transferase subunit alpha (Campylobacter jejuni subsp. doylei (strain ATCC BAA-1458 / RM4099 / 269.97)).